A 165-amino-acid polypeptide reads, in one-letter code: uncharacterized protein (165 aa).

Positions 68–107 (LEGAPEWAAPHPEEQRRSPPACSQHTPPLPSTPTGPPPCS) are disordered. Residues 94–107 (PPLPSTPTGPPPCS) show a composition bias toward pro residues.

This is an uncharacterized protein from Homo sapiens (Human).